Here is a 580-residue protein sequence, read N- to C-terminus: Cytochrome P450 monooxygenase helB1 (580 aa).

The tract at residues 1–32 (MRTYAIRPVSNRLPGPIEPKKHRRDRDNSTTG) is disordered. A glycan (N-linked (GlcNAc...) asparagine) is linked at asparagine 28. A helical membrane pass occupies residues 61–81 (FLNTISVLQVLAAIFIGALTY). Cysteine 497 provides a ligand contact to heme.

This sequence belongs to the cytochrome P450 family. It depends on heme as a cofactor.

It localises to the membrane. Its pathway is mycotoxin biosynthesis. Its function is as follows. Cytochrome P450 monooxygenase; part of the gene cluster that mediates the biosynthesis of helvolic acid, an antibacterial nortriterpenoid. Protostadienol synthase helA cyclizes (3S)-oxidosqualene to (17Z)-protosta-17(20),24-dien-3-beta-ol (protostadienol). The synthesis of protostadienol is followed by several steps of monooxygenation, dehydrogenation, and acyl transfer to yield the final helvolic acid. Following the cyclization to the tetracyclic protostadienol by helA, cytochrome P450 monooxygenases helB1-mediated and helB2-mediated oxidation at C-4 and C-16, acyltransferase helD2-dependent acetylation of 16-OH, oxidation of C-21 by cytochrome P450 monooxygenase helB4, and short chain dehydrogenase helC-dependent oxidative decarboxylation yield the fusidane skeleton. This intermediate is further modified in three additional steps mediated by the cytochrome P450 monooxygenase helB3, the acyltransferase helD1, and the 3-ketosteroid 1-dehydrogenase helE to give helvolic acid. Compared with the late stages in the biosynthesis of helvolic acid, enzymes involved in the early stage modifications act in a relatively strict order. The hydroxylation of C-16 by helB1 and subsequent acetylation by helD2 should occur before the helB3-mediated oxidation of C-21. C-4 demethylation in fusidane-type antibiotics proceeds in an unusual manner though it is also achieved by oxidative decarboxylation. The methyl group at C-4 beta position is oxidized by helB1 and subsequently removed by the short chain dehydrogenase helC. The chain is Cytochrome P450 monooxygenase helB1 from Aspergillus fumigatus (strain ATCC MYA-4609 / CBS 101355 / FGSC A1100 / Af293) (Neosartorya fumigata).